Consider the following 280-residue polypeptide: Probable endonuclease 4 (280 aa).

Positions 68, 108, 143, 177, 180, 214, 227, 229, and 259 each coordinate Zn(2+).

It belongs to the AP endonuclease 2 family. The cofactor is Zn(2+).

It catalyses the reaction Endonucleolytic cleavage to 5'-phosphooligonucleotide end-products.. Endonuclease IV plays a role in DNA repair. It cleaves phosphodiester bonds at apurinic or apyrimidinic (AP) sites, generating a 3'-hydroxyl group and a 5'-terminal sugar phosphate. The chain is Probable endonuclease 4 from Cenarchaeum symbiosum (strain A).